The primary structure comprises 396 residues: Lipopolysaccharide assembly protein B (396 aa).

Residues 1–20 (MIELLFLLLPIAAAYGWYMG) form a helical membrane-spanning segment. Topologically, residues 21-396 (RRSAKKDQDD…IKPVSNQEHN (376 aa)) are cytoplasmic. 4 TPR repeats span residues 35–68 (LSRD…QEIE), 77–109 (FEAE…SPNY), 149–182 (ENAL…KPQE), and 221–254 (VRAS…NPDY). The Fe cation site is built by Cys364, Cys367, Cys378, and Cys381.

This sequence belongs to the LapB family.

It localises to the cell inner membrane. Functionally, modulates cellular lipopolysaccharide (LPS) levels by regulating LpxC, which is involved in lipid A biosynthesis. May act by modulating the proteolytic activity of FtsH towards LpxC. May also coordinate assembly of proteins involved in LPS synthesis at the plasma membrane. The chain is Lipopolysaccharide assembly protein B from Haemophilus influenzae (strain ATCC 51907 / DSM 11121 / KW20 / Rd).